Reading from the N-terminus, the 292-residue chain is Ribosomal RNA small subunit methyltransferase A (292 aa).

Residues Asn-28, Leu-30, Gly-55, Glu-76, Asp-101, and Asn-126 each coordinate S-adenosyl-L-methionine.

Belongs to the class I-like SAM-binding methyltransferase superfamily. rRNA adenine N(6)-methyltransferase family. RsmA subfamily.

The protein resides in the cytoplasm. It carries out the reaction adenosine(1518)/adenosine(1519) in 16S rRNA + 4 S-adenosyl-L-methionine = N(6)-dimethyladenosine(1518)/N(6)-dimethyladenosine(1519) in 16S rRNA + 4 S-adenosyl-L-homocysteine + 4 H(+). Functionally, specifically dimethylates two adjacent adenosines (A1518 and A1519) in the loop of a conserved hairpin near the 3'-end of 16S rRNA in the 30S particle. May play a critical role in biogenesis of 30S subunits. In Bacillus mycoides (strain KBAB4) (Bacillus weihenstephanensis), this protein is Ribosomal RNA small subunit methyltransferase A.